Reading from the N-terminus, the 365-residue chain is Uroporphyrinogen decarboxylase (365 aa).

Residues 27–31, Asp-77, Tyr-154, Ser-209, and His-327 each bind substrate; that span reads RQAGR.

Belongs to the uroporphyrinogen decarboxylase family. As to quaternary structure, homodimer.

Its subcellular location is the cytoplasm. It catalyses the reaction uroporphyrinogen III + 4 H(+) = coproporphyrinogen III + 4 CO2. It participates in porphyrin-containing compound metabolism; protoporphyrin-IX biosynthesis; coproporphyrinogen-III from 5-aminolevulinate: step 4/4. Catalyzes the decarboxylation of four acetate groups of uroporphyrinogen-III to yield coproporphyrinogen-III. The protein is Uroporphyrinogen decarboxylase of Alkalilimnicola ehrlichii (strain ATCC BAA-1101 / DSM 17681 / MLHE-1).